A 362-amino-acid polypeptide reads, in one-letter code: Cobalt-precorrin-5B C(1)-methyltransferase (362 aa).

This sequence belongs to the CbiD family.

The enzyme catalyses Co-precorrin-5B + S-adenosyl-L-methionine = Co-precorrin-6A + S-adenosyl-L-homocysteine. Its pathway is cofactor biosynthesis; adenosylcobalamin biosynthesis; cob(II)yrinate a,c-diamide from sirohydrochlorin (anaerobic route): step 6/10. In terms of biological role, catalyzes the methylation of C-1 in cobalt-precorrin-5B to form cobalt-precorrin-6A. The chain is Cobalt-precorrin-5B C(1)-methyltransferase from Burkholderia ambifaria (strain MC40-6).